Here is a 511-residue protein sequence, read N- to C-terminus: Histidine ammonia-lyase (511 aa).

Positions 143–145 (ASG) form a cross-link, 5-imidazolinone (Ala-Gly). Residue Ser144 is modified to 2,3-didehydroalanine (Ser).

The protein belongs to the PAL/histidase family. Contains an active site 4-methylidene-imidazol-5-one (MIO), which is formed autocatalytically by cyclization and dehydration of residues Ala-Ser-Gly.

It localises to the cytoplasm. The catalysed reaction is L-histidine = trans-urocanate + NH4(+). Its pathway is amino-acid degradation; L-histidine degradation into L-glutamate; N-formimidoyl-L-glutamate from L-histidine: step 1/3. The polypeptide is Histidine ammonia-lyase (Vibrio cholerae serotype O1 (strain ATCC 39315 / El Tor Inaba N16961)).